Reading from the N-terminus, the 251-residue chain is Hydroxyacylglutathione hydrolase (251 aa).

Residues His-53, His-55, Asp-57, His-58, His-110, Asp-127, and His-165 each contribute to the Zn(2+) site.

Belongs to the metallo-beta-lactamase superfamily. Glyoxalase II family. As to quaternary structure, monomer. Zn(2+) is required as a cofactor.

It catalyses the reaction an S-(2-hydroxyacyl)glutathione + H2O = a 2-hydroxy carboxylate + glutathione + H(+). Its pathway is secondary metabolite metabolism; methylglyoxal degradation; (R)-lactate from methylglyoxal: step 2/2. Functionally, thiolesterase that catalyzes the hydrolysis of S-D-lactoyl-glutathione to form glutathione and D-lactic acid. This chain is Hydroxyacylglutathione hydrolase, found in Shigella boydii serotype 4 (strain Sb227).